A 31-amino-acid polypeptide reads, in one-letter code: Photosystem II reaction center protein T (31 aa).

The helical transmembrane segment at 3 to 23 threads the bilayer; it reads SVAYILVLTMTLAVLFFAIAF.

It belongs to the PsbT family. PSII is composed of 1 copy each of membrane proteins PsbA, PsbB, PsbC, PsbD, PsbE, PsbF, PsbH, PsbI, PsbJ, PsbK, PsbL, PsbM, PsbT, PsbX, PsbY, PsbZ, Psb30/Ycf12, peripheral proteins PsbO, CyanoQ (PsbQ), PsbU, PsbV and a large number of cofactors. It forms dimeric complexes.

It localises to the cellular thylakoid membrane. Its function is as follows. Found at the monomer-monomer interface of the photosystem II (PS II) dimer, plays a role in assembly and dimerization of PSII. PSII is a light-driven water plastoquinone oxidoreductase, using light energy to abstract electrons from H(2)O, generating a proton gradient subsequently used for ATP formation. The chain is Photosystem II reaction center protein T from Rippkaea orientalis (strain PCC 8801 / RF-1) (Cyanothece sp. (strain PCC 8801)).